We begin with the raw amino-acid sequence, 229 residues long: Synaptogyrin-3 (229 aa).

The residue at position 1 (M1) is an N-acetylmethionine. The 153-residue stretch at 20–172 (FARRPQTLLR…LTVKALQRFR (153 aa)) folds into the MARVEL domain. The next 4 membrane-spanning stretches (helical) occupy residues 30–50 (VASW…GYVN), 70–90 (FGVA…LLDV), 105–125 (VLLD…GFCF), and 148–168 (AAIA…VKAL). Residues 209 to 219 (QSPPFTETLDT) are compositionally biased toward polar residues. Residues 209–229 (QSPPFTETLDTSPKGYQVPAY) are disordered.

It belongs to the synaptogyrin family. As to quaternary structure, interacts (via N-terminus) with SLC6A3 (via N-terminus). May interact with VMAT2. In terms of tissue distribution, expressed in brain and placenta.

Its subcellular location is the cytoplasmic vesicle. It localises to the secretory vesicle. The protein localises to the synaptic vesicle membrane. The protein resides in the synapse. In terms of biological role, may play a role in regulated exocytosis. May indirectly regulate the activity of the plasma membrane dopamine transporter SLC6A3 and thereby regulate dopamine transport back from the synaptic cleft into the presynaptic terminal. The polypeptide is Synaptogyrin-3 (Homo sapiens (Human)).